The sequence spans 483 residues: Glutamate--tRNA ligase (483 aa).

The 'HIGH' region signature appears at 14-24; it reads PSPTGDPHVGT. The 'KMSKS' region signature appears at 253–257; sequence KISKR. Lysine 256 contacts ATP.

The protein belongs to the class-I aminoacyl-tRNA synthetase family. Glutamate--tRNA ligase type 1 subfamily. In terms of assembly, monomer.

The protein localises to the cytoplasm. The enzyme catalyses tRNA(Glu) + L-glutamate + ATP = L-glutamyl-tRNA(Glu) + AMP + diphosphate. Catalyzes the attachment of glutamate to tRNA(Glu) in a two-step reaction: glutamate is first activated by ATP to form Glu-AMP and then transferred to the acceptor end of tRNA(Glu). This is Glutamate--tRNA ligase from Deinococcus radiodurans (strain ATCC 13939 / DSM 20539 / JCM 16871 / CCUG 27074 / LMG 4051 / NBRC 15346 / NCIMB 9279 / VKM B-1422 / R1).